Consider the following 424-residue polypeptide: Gamma-glutamyl phosphate reductase (424 aa).

It belongs to the gamma-glutamyl phosphate reductase family.

The protein resides in the cytoplasm. The catalysed reaction is L-glutamate 5-semialdehyde + phosphate + NADP(+) = L-glutamyl 5-phosphate + NADPH + H(+). The protein operates within amino-acid biosynthesis; L-proline biosynthesis; L-glutamate 5-semialdehyde from L-glutamate: step 2/2. Catalyzes the NADPH-dependent reduction of L-glutamate 5-phosphate into L-glutamate 5-semialdehyde and phosphate. The product spontaneously undergoes cyclization to form 1-pyrroline-5-carboxylate. The protein is Gamma-glutamyl phosphate reductase of Halorhodospira halophila (strain DSM 244 / SL1) (Ectothiorhodospira halophila (strain DSM 244 / SL1)).